Here is a 171-residue protein sequence, read N- to C-terminus: 3-hydroxydecanoyl-[acyl-carrier-protein] dehydratase (171 aa).

Residue His-70 is part of the active site.

The protein belongs to the thioester dehydratase family. FabA subfamily. In terms of assembly, homodimer.

It is found in the cytoplasm. It carries out the reaction a (3R)-hydroxyacyl-[ACP] = a (2E)-enoyl-[ACP] + H2O. The enzyme catalyses (3R)-hydroxydecanoyl-[ACP] = (2E)-decenoyl-[ACP] + H2O. It catalyses the reaction (2E)-decenoyl-[ACP] = (3Z)-decenoyl-[ACP]. It functions in the pathway lipid metabolism; fatty acid biosynthesis. Functionally, necessary for the introduction of cis unsaturation into fatty acids. Catalyzes the dehydration of (3R)-3-hydroxydecanoyl-ACP to E-(2)-decenoyl-ACP and then its isomerization to Z-(3)-decenoyl-ACP. Can catalyze the dehydratase reaction for beta-hydroxyacyl-ACPs with saturated chain lengths up to 16:0, being most active on intermediate chain length. The polypeptide is 3-hydroxydecanoyl-[acyl-carrier-protein] dehydratase (Marinomonas sp. (strain MWYL1)).